The following is a 369-amino-acid chain: tRNA 2-selenouridine synthase (369 aa).

The Rhodanese domain occupies 15 to 138 (MLSGHPMMDV…MRQYLIEVID (124 aa)). Cys98 serves as the catalytic S-selanylcysteine intermediate.

The protein belongs to the SelU family. As to quaternary structure, monomer.

It catalyses the reaction 5-methylaminomethyl-2-thiouridine(34) in tRNA + selenophosphate + (2E)-geranyl diphosphate + H2O + H(+) = 5-methylaminomethyl-2-selenouridine(34) in tRNA + (2E)-thiogeraniol + phosphate + diphosphate. It carries out the reaction 5-methylaminomethyl-2-thiouridine(34) in tRNA + (2E)-geranyl diphosphate = 5-methylaminomethyl-S-(2E)-geranyl-thiouridine(34) in tRNA + diphosphate. The catalysed reaction is 5-methylaminomethyl-S-(2E)-geranyl-thiouridine(34) in tRNA + selenophosphate + H(+) = 5-methylaminomethyl-2-(Se-phospho)selenouridine(34) in tRNA + (2E)-thiogeraniol. The enzyme catalyses 5-methylaminomethyl-2-(Se-phospho)selenouridine(34) in tRNA + H2O = 5-methylaminomethyl-2-selenouridine(34) in tRNA + phosphate. Its function is as follows. Involved in the post-transcriptional modification of the uridine at the wobble position (U34) of tRNA(Lys), tRNA(Glu) and tRNA(Gln). Catalyzes the conversion of 2-thiouridine (S2U-RNA) to 2-selenouridine (Se2U-RNA). Acts in a two-step process involving geranylation of 2-thiouridine (S2U) to S-geranyl-2-thiouridine (geS2U) and subsequent selenation of the latter derivative to 2-selenouridine (Se2U) in the tRNA chain. In Shewanella sediminis (strain HAW-EB3), this protein is tRNA 2-selenouridine synthase.